Consider the following 206-residue polypeptide: Large ribosomal subunit protein uL3 (206 aa).

It belongs to the universal ribosomal protein uL3 family. In terms of assembly, part of the 50S ribosomal subunit. Forms a cluster with proteins L14 and L19.

Its function is as follows. One of the primary rRNA binding proteins, it binds directly near the 3'-end of the 23S rRNA, where it nucleates assembly of the 50S subunit. This is Large ribosomal subunit protein uL3 from Cytophaga hutchinsonii (strain ATCC 33406 / DSM 1761 / CIP 103989 / NBRC 15051 / NCIMB 9469 / D465).